The sequence spans 503 residues: Cytochrome c lysine N-methyltransferase 1 (503 aa).

One can recognise an SET domain in the interval 52 to 276 (SKFELLRIPR…EEAQVFISYA (225 aa)). Residues 190 to 291 (NYEKLISTVY…VHFEQIYGFL (102 aa)) are SET-like.

It belongs to the class V-like SAM-binding methyltransferase superfamily.

It localises to the cytoplasm. The protein resides in the cytosol. It carries out the reaction L-lysyl-[cytochrome c] + S-adenosyl-L-methionine = N(6)-methyl-L-lysyl-[cytochrome c] + S-adenosyl-L-homocysteine + H(+). Its function is as follows. Methyltransferase which mediates trimethylation of cytochrome c (CYC1). In Kluyveromyces lactis (strain ATCC 8585 / CBS 2359 / DSM 70799 / NBRC 1267 / NRRL Y-1140 / WM37) (Yeast), this protein is Cytochrome c lysine N-methyltransferase 1 (CTM1).